Reading from the N-terminus, the 163-residue chain is Nucleotide-binding protein NTHI1194 (163 aa).

This sequence belongs to the YajQ family.

Functionally, nucleotide-binding protein. The sequence is that of Nucleotide-binding protein NTHI1194 from Haemophilus influenzae (strain 86-028NP).